We begin with the raw amino-acid sequence, 198 residues long: Recombination protein RecR (198 aa).

The C4-type zinc finger occupies 57–72 (CSICGNLTDEDPCAIC). A Toprim domain is found at 80–175 (STILIVEDSR…KVTRLARGLA (96 aa)).

Belongs to the RecR family.

Functionally, may play a role in DNA repair. It seems to be involved in an RecBC-independent recombinational process of DNA repair. It may act with RecF and RecO. The polypeptide is Recombination protein RecR (Streptococcus gordonii (strain Challis / ATCC 35105 / BCRC 15272 / CH1 / DL1 / V288)).